A 93-amino-acid chain; its full sequence is UPF0223 protein LACR_0546 (93 aa).

It belongs to the UPF0223 family.

The sequence is that of UPF0223 protein LACR_0546 from Lactococcus lactis subsp. cremoris (strain SK11).